The following is a 98-amino-acid chain: Acylphosphatase (98 aa).

The Acylphosphatase-like domain maps to 10–96 (ARLLRIRGRV…TDGAGFDCLP (87 aa)). Active-site residues include arginine 25 and asparagine 43.

This sequence belongs to the acylphosphatase family.

The catalysed reaction is an acyl phosphate + H2O = a carboxylate + phosphate + H(+). The chain is Acylphosphatase (acyP) from Azoarcus sp. (strain BH72).